The primary structure comprises 514 residues: Putative ankyrin repeat protein R863 (514 aa).

ANK repeat units follow at residues 45-74 (AKID…LKHP), 84-114 (KSLN…DINS), 115-144 (KKNR…DVRA), 146-174 (KDYA…NIKV), 176-204 (DNFA…NIRA), 205-234 (DNNY…DIRA), 236-264 (NNYA…NVKS), 266-294 (NDCA…DVRS), 295-324 (ENDY…NVRA), 325-354 (DNNY…NIRS), 356-384 (NDYA…NFKS), 385-414 (DYDC…DIRV), 415-444 (NNDY…DIRA), 446-474 (NDYA…NVKA), and 476-504 (NNYA…DVRS).

The polypeptide is Putative ankyrin repeat protein R863 (Acanthamoeba polyphaga mimivirus (APMV)).